Consider the following 221-residue polypeptide: Orotate phosphoribosyltransferase (221 aa).

Position 27 (K27) interacts with 5-phospho-alpha-D-ribose 1-diphosphate. 35 to 36 (FF) is a binding site for orotate. 5-phospho-alpha-D-ribose 1-diphosphate contacts are provided by residues 75-76 (YK), R102, K103, K106, H108, and 128-136 (DDVLTAGTA). Residues T132 and R160 each coordinate orotate.

It belongs to the purine/pyrimidine phosphoribosyltransferase family. PyrE subfamily. As to quaternary structure, homodimer. Requires Mg(2+) as cofactor.

It carries out the reaction orotidine 5'-phosphate + diphosphate = orotate + 5-phospho-alpha-D-ribose 1-diphosphate. It functions in the pathway pyrimidine metabolism; UMP biosynthesis via de novo pathway; UMP from orotate: step 1/2. Functionally, catalyzes the transfer of a ribosyl phosphate group from 5-phosphoribose 1-diphosphate to orotate, leading to the formation of orotidine monophosphate (OMP). The protein is Orotate phosphoribosyltransferase of Dichelobacter nodosus (strain VCS1703A).